We begin with the raw amino-acid sequence, 410 residues long: E3 ubiquitin-protein ligase MARCHF4 (410 aa).

Positions 1–18 (MLMPLCGLLWWWWCCCSG) are cleaved as a signal peptide. The interval 92–136 (GPREVVGREPPPVPPPPPLPPSSVEDDWGGPATEPPASLLSSASS) is disordered. Residues 100–112 (EPPPVPPPPPLPP) show a composition bias toward pro residues. Residues 126-136 (PPASLLSSASS) are compositionally biased toward low complexity. An RING-CH-type zinc finger spans residues 155 to 215 (DSGMRTPLCR…ELCYYKYHVI (61 aa)). Zn(2+) contacts are provided by cysteine 163, cysteine 166, cysteine 179, cysteine 181, histidine 189, cysteine 192, cysteine 205, and cysteine 208. A run of 2 helical transmembrane segments spans residues 238–258 (VAAAILGSLFLIASISWLIWS) and 272–292 (LFQICYGMYGFMDVVCIGLII). 2 disordered regions span residues 324–372 (EDQK…SGPL) and 390–410 (PHEQRSPPGSSRELVMRVTTV). The span at 333-346 (NPRTSSSTQANIPS) shows a compositional bias: polar residues. A compositionally biased stretch (low complexity) spans 352-366 (AGTPAPEQGPAQAAG).

As to expression, expressed in brain and placenta.

Its subcellular location is the golgi apparatus membrane. The catalysed reaction is S-ubiquitinyl-[E2 ubiquitin-conjugating enzyme]-L-cysteine + [acceptor protein]-L-lysine = [E2 ubiquitin-conjugating enzyme]-L-cysteine + N(6)-ubiquitinyl-[acceptor protein]-L-lysine.. It functions in the pathway protein modification; protein ubiquitination. In terms of biological role, E3 ubiquitin-protein ligase that may mediate ubiquitination of MHC-I and CD4, and promote their subsequent endocytosis and sorting to lysosomes via multivesicular bodies. E3 ubiquitin ligases accept ubiquitin from an E2 ubiquitin-conjugating enzyme in the form of a thioester and then directly transfer the ubiquitin to targeted substrates. The protein is E3 ubiquitin-protein ligase MARCHF4 of Homo sapiens (Human).